The sequence spans 204 residues: Recombination protein RecR (204 aa).

A C4-type zinc finger spans residues 58–75 (CSVCQNITDLGVDPCHIC). The Toprim domain maps to 83–181 (SVICVVESPT…NVTRIARGIP (99 aa)).

Belongs to the RecR family.

Functionally, may play a role in DNA repair. It seems to be involved in an RecBC-independent recombinational process of DNA repair. It may act with RecF and RecO. The protein is Recombination protein RecR of Chlorobaculum tepidum (strain ATCC 49652 / DSM 12025 / NBRC 103806 / TLS) (Chlorobium tepidum).